The chain runs to 423 residues: Histidine--tRNA ligase (423 aa).

Belongs to the class-II aminoacyl-tRNA synthetase family. In terms of assembly, homodimer.

It localises to the cytoplasm. The enzyme catalyses tRNA(His) + L-histidine + ATP = L-histidyl-tRNA(His) + AMP + diphosphate + H(+). The chain is Histidine--tRNA ligase (hisS) from Mycobacterium bovis (strain ATCC BAA-935 / AF2122/97).